The following is a 403-amino-acid chain: Argininosuccinate synthase (403 aa).

ATP is bound by residues 10–18 (AYSGGLDTS) and alanine 37. Residues tyrosine 88 and serine 93 each coordinate L-citrulline. Glycine 118 is a binding site for ATP. L-aspartate-binding residues include threonine 120, asparagine 124, and aspartate 125. Asparagine 124 is a binding site for L-citrulline. Residues arginine 128, serine 178, serine 187, glutamate 263, and tyrosine 275 each contribute to the L-citrulline site.

The protein belongs to the argininosuccinate synthase family. Type 1 subfamily. In terms of assembly, homotetramer.

Its subcellular location is the cytoplasm. The enzyme catalyses L-citrulline + L-aspartate + ATP = 2-(N(omega)-L-arginino)succinate + AMP + diphosphate + H(+). It participates in amino-acid biosynthesis; L-arginine biosynthesis; L-arginine from L-ornithine and carbamoyl phosphate: step 2/3. This chain is Argininosuccinate synthase, found in Marinobacter nauticus (strain ATCC 700491 / DSM 11845 / VT8) (Marinobacter aquaeolei).